We begin with the raw amino-acid sequence, 44 residues long: Cytochrome b559 subunit beta (44 aa).

The chain crosses the membrane as a helical span at residues 19-35 (WLSIHALAVPTIFFLGS). H23 lines the heme pocket.

Belongs to the PsbE/PsbF family. As to quaternary structure, heterodimer of an alpha subunit and a beta subunit. PSII is composed of 1 copy each of membrane proteins PsbA, PsbB, PsbC, PsbD, PsbE, PsbF, PsbH, PsbI, PsbJ, PsbK, PsbL, PsbM, PsbT, PsbX, PsbY, PsbZ, Psb30/Ycf12, at least 3 peripheral proteins of the oxygen-evolving complex and a large number of cofactors. It forms dimeric complexes. Heme b is required as a cofactor.

The protein resides in the plastid. Its subcellular location is the chloroplast thylakoid membrane. Its function is as follows. This b-type cytochrome is tightly associated with the reaction center of photosystem II (PSII). PSII is a light-driven water:plastoquinone oxidoreductase that uses light energy to abstract electrons from H(2)O, generating O(2) and a proton gradient subsequently used for ATP formation. It consists of a core antenna complex that captures photons, and an electron transfer chain that converts photonic excitation into a charge separation. The sequence is that of Cytochrome b559 subunit beta from Tetradesmus obliquus (Green alga).